A 289-amino-acid chain; its full sequence is Inorganic pyrophosphatase (289 aa).

N-acetylserine is present on Ser2. Lys57 is modified (N6-acetyllysine). Residues Asp116, Asp121, and Asp153 each coordinate Mg(2+). N6-acetyllysine is present on Lys228. Ser250 is modified (phosphoserine).

This sequence belongs to the PPase family. In terms of assembly, homodimer. Requires Mg(2+) as cofactor.

Its subcellular location is the cytoplasm. The catalysed reaction is diphosphate + H2O = 2 phosphate + H(+). This is Inorganic pyrophosphatase (PPA1) from Macaca fascicularis (Crab-eating macaque).